A 334-amino-acid polypeptide reads, in one-letter code: MPTMGNKNSMCGLKRFPNYKKSPIGSFAKNSSSHDGIKTIEAVNSCSFSRKADLCIRIITWNMNGNVSYEDLVELVGKERKFDLLVVGLQEAPKANVDQLLQTASSPTHELLGKAKLQSVQLYLFGPKNSHTLVKELKAERYSVGGCGGLIGRKKGAVAIRINYDDIKMVFISCHLSAHAKKVDQRNTELRHIANSLLPRDKRKRDLTVWLGDLNYRIQDVSNHPVRSLIQNHLQSVLVSKDQLLQEAERGEIFKGYSEGTLGFKPTYKYNVGSSDYDTSHKIRVPAWTDRILFKIQDTDNIQATLHSYDSIDQVYGSDHKPVKADLCLKWVNS.

Catalytic regions lie at residues 206 to 222 (DLTV…QDVS) and 282 to 297 (KIRV…FKIQ).

It belongs to the inositol polyphosphate 5-phosphatase family. As to expression, expressed ubiquitously.

Its subcellular location is the cell membrane. The catalysed reaction is a 1,2-diacyl-sn-glycero-3-phospho-(1D-myo-inositol-4,5-bisphosphate) + H2O = a 1,2-diacyl-sn-glycero-3-phospho-(1D-myo-inositol 4-phosphate) + phosphate. The enzyme catalyses a 1,2-diacyl-sn-glycero-3-phospho-(1D-myo-inositol-3,4,5-trisphosphate) + H2O = a 1,2-diacyl-sn-glycero-3-phospho-(1D-myo-inositol-3,4-bisphosphate) + phosphate. Its function is as follows. Has phosphatase activity toward PtdIns(4,5)P2, and in vitro toward PtdIns(3,5)P2 and PtdIns(3,4,5)P3. Cannot dephosphorylate PtdIns(5)P, Ins(1,4,5)P3 and Ins(1,3,4,5)P4. This chain is Type IV inositol polyphosphate 5-phosphatase 11, found in Arabidopsis thaliana (Mouse-ear cress).